A 367-amino-acid chain; its full sequence is tRNA uridine(34) hydroxylase (367 aa).

The region spanning 159–253 is the Rhodanese domain; that stretch reads EDENSIVVDV…YAHEVSQKGL (95 aa). The active-site Cysteine persulfide intermediate is Cys213.

Belongs to the TrhO family.

It carries out the reaction uridine(34) in tRNA + AH2 + O2 = 5-hydroxyuridine(34) in tRNA + A + H2O. Catalyzes oxygen-dependent 5-hydroxyuridine (ho5U) modification at position 34 in tRNAs. The protein is tRNA uridine(34) hydroxylase of Leptospira interrogans serogroup Icterohaemorrhagiae serovar Lai (strain 56601).